The chain runs to 443 residues: Probable glycine dehydrogenase (decarboxylating) subunit 1 (443 aa).

The protein belongs to the GcvP family. N-terminal subunit subfamily. The glycine cleavage system is composed of four proteins: P, T, L and H. In this organism, the P 'protein' is a heterodimer of two subunits.

The enzyme catalyses N(6)-[(R)-lipoyl]-L-lysyl-[glycine-cleavage complex H protein] + glycine + H(+) = N(6)-[(R)-S(8)-aminomethyldihydrolipoyl]-L-lysyl-[glycine-cleavage complex H protein] + CO2. In terms of biological role, the glycine cleavage system catalyzes the degradation of glycine. The P protein binds the alpha-amino group of glycine through its pyridoxal phosphate cofactor; CO(2) is released and the remaining methylamine moiety is then transferred to the lipoamide cofactor of the H protein. The sequence is that of Probable glycine dehydrogenase (decarboxylating) subunit 1 from Endomicrobium trichonymphae.